The primary structure comprises 311 residues: Transmembrane protein DDB_G0273707/DDB_G0273361 (311 aa).

The segment at 1 to 113 (MNEIEVDNLS…NNNNNKNENN (113 aa)) is disordered. An N-linked (GlcNAc...) asparagine glycan is attached at N8. Positions 9 to 18 (LSHTNKNVAT) are enriched in polar residues. N-linked (GlcNAc...) asparagine glycans are attached at residues N35, N38, N62, and N76. Low complexity-rich tracts occupy residues 37–67 (SNNS…SNSN) and 76–111 (NNSN…NKNE). Residues 95 to 124 (NNNNNNNNNNNNNNKNENNNKIKNEKINIL) adopt a coiled-coil conformation. Transmembrane regions (helical) follow at residues 150–170 (LEEI…LALL), 181–201 (IFLL…PKSP), 208–228 (LVLG…ALVY), 235–255 (VACA…KSIH), and 276–296 (FYYI…TALI).

It is found in the membrane. This chain is Transmembrane protein DDB_G0273707/DDB_G0273361, found in Dictyostelium discoideum (Social amoeba).